Here is a 103-residue protein sequence, read N- to C-terminus: Protein Rev (103 aa).

At Ser5 the chain carries Phosphoserine; by host CK2. The tract at residues 18-26 (VIKILYQSN) is homomultimerization. Polar residues predominate over residues 25 to 34 (SNPYPNDSGT). 2 disordered regions span residues 25–48 (SNPYPNDSGTRQARKNRRRRWRAR) and 66–103 (GLQEPSTLPLPPLDRLSLNPEEDLGTSETEHPQGTATT). The Nuclear localization signal and RNA-binding (RRE) signature appears at 34–50 (TRQARKNRRRRWRARQR). Residues 36–48 (QARKNRRRRWRAR) are compositionally biased toward basic residues. The Nuclear export signal and binding to XPO1 motif lies at 73–84 (LPLPPLDRLSLN). Ser92 is subject to Phosphoserine; by host.

The protein belongs to the HIV-1 REV protein family. As to quaternary structure, homomultimer; when bound to the RRE. Multimeric assembly is essential for activity and may involve XPO1. Binds to human KPNB1, XPO1, TNPO1, RANBP5 and IPO7. Interacts with the viral Integrase. Interacts with human KHDRBS1. Interacts with human NAP1; this interaction decreases Rev multimerization and stimulates its activity. Interacts with human DEAD-box helicases DDX3 and DDX24; these interactions may serve for viral RNA export to the cytoplasm and packaging, respectively. Interacts with human PSIP1; this interaction may inhibit HIV-1 DNA integration by promoting dissociation of the Integrase-LEDGF/p75 complex. Asymmetrically arginine dimethylated at one site by host PRMT6. Methylation impairs the RNA-binding activity and export of viral RNA from the nucleus to the cytoplasm. In terms of processing, phosphorylated by protein kinase CK2. Presence of, and maybe binding to the N-terminus of the regulatory beta subunit of CK2 is necessary for CK2-mediated Rev's phosphorylation.

The protein resides in the host nucleus. It is found in the host nucleolus. Its subcellular location is the host cytoplasm. Its function is as follows. Escorts unspliced or incompletely spliced viral pre-mRNAs (late transcripts) out of the nucleus of infected cells. These pre-mRNAs carry a recognition sequence called Rev responsive element (RRE) located in the env gene, that is not present in fully spliced viral mRNAs (early transcripts). This function is essential since most viral proteins are translated from unspliced or partially spliced pre-mRNAs which cannot exit the nucleus by the pathway used by fully processed cellular mRNAs. Rev itself is translated from a fully spliced mRNA that readily exits the nucleus. Rev's nuclear localization signal (NLS) binds directly to KPNB1/Importin beta-1 without previous binding to KPNA1/Importin alpha-1. KPNB1 binds to the GDP bound form of RAN (Ran-GDP) and targets Rev to the nucleus. In the nucleus, the conversion from Ran-GDP to Ran-GTP dissociates Rev from KPNB1 and allows Rev's binding to the RRE in viral pre-mRNAs. Rev multimerization on the RRE via cooperative assembly exposes its nuclear export signal (NES) to the surface. Rev can then form a complex with XPO1/CRM1 and Ran-GTP, leading to nuclear export of the complex. Conversion from Ran-GTP to Ran-GDP mediates dissociation of the Rev/RRE/XPO1/RAN complex, so that Rev can return to the nucleus for a subsequent round of export. Beside KPNB1, also seems to interact with TNPO1/Transportin-1, RANBP5/IPO5 and IPO7/RANBP7 for nuclear import. The nucleoporin-like HRB/RIP is an essential cofactor that probably indirectly interacts with Rev to release HIV RNAs from the perinuclear region to the cytoplasm. The protein is Protein Rev of Pan troglodytes (Chimpanzee).